A 133-amino-acid polypeptide reads, in one-letter code: Holo-[acyl-carrier-protein] synthase (133 aa).

Residues Asp-8 and Glu-58 each coordinate Mg(2+).

This sequence belongs to the P-Pant transferase superfamily. AcpS family. The cofactor is Mg(2+).

It is found in the cytoplasm. The enzyme catalyses apo-[ACP] + CoA = holo-[ACP] + adenosine 3',5'-bisphosphate + H(+). Its function is as follows. Transfers the 4'-phosphopantetheine moiety from coenzyme A to a Ser of acyl-carrier-protein. The protein is Holo-[acyl-carrier-protein] synthase of Sphingopyxis alaskensis (strain DSM 13593 / LMG 18877 / RB2256) (Sphingomonas alaskensis).